The following is a 225-amino-acid chain: Pyridoxine/pyridoxamine 5'-phosphate oxidase (225 aa).

Residues 9–12 (RVDY) and Lys78 each bind substrate. Residues 73–78 (RTVLCK), 88–89 (YT), Lys95, and Gln117 each bind FMN. Substrate contacts are provided by Tyr135, Arg139, and Ser143. FMN is bound by residues 152–153 (QS) and Trp198. Residue 204-206 (RLH) participates in substrate binding. Arg208 contacts FMN.

This sequence belongs to the pyridoxamine 5'-phosphate oxidase family. As to quaternary structure, homodimer. The cofactor is FMN.

The catalysed reaction is pyridoxamine 5'-phosphate + O2 + H2O = pyridoxal 5'-phosphate + H2O2 + NH4(+). It carries out the reaction pyridoxine 5'-phosphate + O2 = pyridoxal 5'-phosphate + H2O2. It functions in the pathway cofactor metabolism; pyridoxal 5'-phosphate salvage; pyridoxal 5'-phosphate from pyridoxamine 5'-phosphate: step 1/1. The protein operates within cofactor metabolism; pyridoxal 5'-phosphate salvage; pyridoxal 5'-phosphate from pyridoxine 5'-phosphate: step 1/1. Functionally, catalyzes the oxidation of either pyridoxine 5'-phosphate (PNP) or pyridoxamine 5'-phosphate (PMP) into pyridoxal 5'-phosphate (PLP). The polypeptide is Pyridoxine/pyridoxamine 5'-phosphate oxidase (Nocardia farcinica (strain IFM 10152)).